A 212-amino-acid chain; its full sequence is 2-hydroxychromene-2-carboxylate isomerase (212 aa).

Ser-24 (nucleophile) is an active-site residue. Ser-24 contacts glutathione. Substrate-binding positions include Lys-56, Asn-66–Arg-67, and Tyr-97. Glutathione is bound by residues Val-181 and Trp-192–Asp-195.

This sequence belongs to the GST superfamily. NadH family. The cofactor is glutathione.

The catalysed reaction is 2-hydroxychromene-2-carboxylate = (3E)-4-(2-hydroxyphenyl)-2-oxobut-3-enoate. It participates in aromatic compound metabolism; naphthalene degradation. Its function is as follows. Involved in the naphthalene catabolic pathway. Catalyzes the reversible glutathione-dependent isomerization of 2-hydroxychromene-2-carboxylate (HCCA) to trans-O-hydroxybenzylidenepyruvate (THBPA). In Pseudomonas sp. (strain C18), this protein is 2-hydroxychromene-2-carboxylate isomerase (doxJ).